The primary structure comprises 284 residues: 4-diphosphocytidyl-2-C-methyl-D-erythritol kinase (284 aa).

Lys10 is an active-site residue. An ATP-binding site is contributed by 92 to 102 (PYGAGLGSGSS). Residue Asp134 is part of the active site.

The protein belongs to the GHMP kinase family. IspE subfamily.

It catalyses the reaction 4-CDP-2-C-methyl-D-erythritol + ATP = 4-CDP-2-C-methyl-D-erythritol 2-phosphate + ADP + H(+). It functions in the pathway isoprenoid biosynthesis; isopentenyl diphosphate biosynthesis via DXP pathway; isopentenyl diphosphate from 1-deoxy-D-xylulose 5-phosphate: step 3/6. Functionally, catalyzes the phosphorylation of the position 2 hydroxy group of 4-diphosphocytidyl-2C-methyl-D-erythritol. In Salinibacter ruber (strain DSM 13855 / M31), this protein is 4-diphosphocytidyl-2-C-methyl-D-erythritol kinase.